The following is a 923-amino-acid chain: Alanine--tRNA ligase (923 aa).

4 residues coordinate Zn(2+): H611, H615, C714, and H718. A compositionally biased stretch (gly residues) spans 886 to 903 (VGGGGGGRPNMARGGGTD). The disordered stretch occupies residues 886–909 (VGGGGGGRPNMARGGGTDPSGMDN).

It belongs to the class-II aminoacyl-tRNA synthetase family. Requires Zn(2+) as cofactor.

Its subcellular location is the cytoplasm. The enzyme catalyses tRNA(Ala) + L-alanine + ATP = L-alanyl-tRNA(Ala) + AMP + diphosphate. Catalyzes the attachment of alanine to tRNA(Ala) in a two-step reaction: alanine is first activated by ATP to form Ala-AMP and then transferred to the acceptor end of tRNA(Ala). Also edits incorrectly charged Ser-tRNA(Ala) and Gly-tRNA(Ala) via its editing domain. The protein is Alanine--tRNA ligase of Methanococcoides burtonii (strain DSM 6242 / NBRC 107633 / OCM 468 / ACE-M).